The primary structure comprises 490 residues: Katanin p60 ATPase-containing subunit A-like 1 (490 aa).

Position 1 is an N-acetylmethionine (Met1). The disordered stretch occupies residues 87–182 (SCQDEPVRDP…ASDGEIPKFD (96 aa)). Over residues 116–127 (SNREVRPLRKDM) the composition is skewed to basic and acidic residues. Residues 128–139 (AGVGARGPVGRA) are compositionally biased toward low complexity. Positions 143–169 (SKSEKPSTSRDKDNRARGKDDKGRKNM) are enriched in basic and acidic residues. Ser174 bears the Phosphoserine mark. An ATP-binding site is contributed by 248-255 (GPPGTGKT).

Belongs to the AAA ATPase family. Katanin p60 subunit A1 subfamily. A-like 1 sub-subfamily. As to quaternary structure, interacts with KATNB1 and KATNBL1.

Its subcellular location is the cytoplasm. It localises to the cytoskeleton. The protein localises to the spindle pole. It is found in the spindle. The catalysed reaction is n ATP + n H2O + a microtubule = n ADP + n phosphate + (n+1) alpha/beta tubulin heterodimers.. Regulates microtubule dynamics in Sertoli cells, a process that is essential for spermiogenesis and male fertility. Severs microtubules in an ATP-dependent manner, promoting rapid reorganization of cellular microtubule arrays. Has microtubule-severing activity in vitro. In Otolemur garnettii (Small-eared galago), this protein is Katanin p60 ATPase-containing subunit A-like 1.